A 316-amino-acid polypeptide reads, in one-letter code: Alpha- and gamma-adaptin-binding protein p34 (316 aa).

The segment at Ala198 to Gly232 is disordered. Residues Gly222–Gly232 are compositionally biased toward low complexity. Phosphoserine occurs at positions 311 and 312.

As to quaternary structure, associated with AP-1 and AP-2 complexes.

The protein localises to the cytoplasm. It is found in the cytosol. In terms of biological role, may be involved in endocytic recycling of growth factor receptors such as EGFR. This Mus musculus (Mouse) protein is Alpha- and gamma-adaptin-binding protein p34 (Aagab).